The sequence spans 310 residues: 4-diphosphocytidyl-2-C-methyl-D-erythritol kinase (310 aa).

The active site involves Lys-11. 95 to 105 serves as a coordination point for ATP; it reads PIGAGLAGGSA. Asp-137 is a catalytic residue.

This sequence belongs to the GHMP kinase family. IspE subfamily.

It carries out the reaction 4-CDP-2-C-methyl-D-erythritol + ATP = 4-CDP-2-C-methyl-D-erythritol 2-phosphate + ADP + H(+). It functions in the pathway isoprenoid biosynthesis; isopentenyl diphosphate biosynthesis via DXP pathway; isopentenyl diphosphate from 1-deoxy-D-xylulose 5-phosphate: step 3/6. In terms of biological role, catalyzes the phosphorylation of the position 2 hydroxy group of 4-diphosphocytidyl-2C-methyl-D-erythritol. This Acaryochloris marina (strain MBIC 11017) protein is 4-diphosphocytidyl-2-C-methyl-D-erythritol kinase.